The primary structure comprises 1023 residues: Sodium/potassium-transporting ATPase subunit alpha-1 (1023 aa).

A propeptide spanning residues 1–5 (MGLGK) is cleaved from the precursor. Positions 1–11 (MGLGKGKDEYK) are enriched in basic and acidic residues. Residues 1 to 33 (MGLGKGKDEYKLAATSEDGGKKDKKAKAKKDMD) are disordered. Residues 6-87 (GKDEYKLAAT…NALTPPPTTP (82 aa)) lie on the Cytoplasmic side of the membrane. Phosphoserine; by PKC is present on Ser-16. The interval 82-84 (PPP) is interaction with phosphoinositide-3 kinase. A helical transmembrane segment spans residues 88–108 (EWVKFCKQLFGGFSMLLWIGA). Topologically, residues 109–131 (ILCFLAYGIQAASEDEPANDNLY) are extracellular. The helical transmembrane segment at 132 to 152 (LGIVLSAVVIITGCFSYYQEA) threads the bilayer. The Cytoplasmic segment spans residues 153–288 (KSSKIMESFK…GGKTPIAIEI (136 aa)). The interval 216–237 (SSLTGESEPQTRSPDFSNENPL) is disordered. Residues 289-308 (EHFIHIITGVAVFLGVSFFI) traverse the membrane as a helical segment. The Extracellular segment spans residues 309–320 (LSLILGYNWLEA). The helical transmembrane segment at 321-338 (VIFLIGIIVANVPEGLLA) threads the bilayer. The Cytoplasmic portion of the chain corresponds to 339-772 (TVTVCLTLTA…EEGRLIFDNL (434 aa)). The active-site 4-aspartylphosphate intermediate is the Asp-376. Residue Lys-487 coordinates ATP. Positions 717 and 721 each coordinate Mg(2+). The chain crosses the membrane as a helical span at residues 773-792 (KKSIAYTLTSNIPEISPFLL). The Extracellular portion of the chain corresponds to 793-802 (FIIANIPLPL). The chain crosses the membrane as a helical span at residues 803-823 (GTVTILCIDLGTDMVPAISLA). Residues 824-843 (YEKAESDIMKRQPRNPKTDK) lie on the Cytoplasmic side of the membrane. The chain crosses the membrane as a helical span at residues 844–866 (LVNERLISIAYGQIGMMQATAGF). Topologically, residues 867-918 (FTYFVILAENGFLPMDLIGVRVLWDDKYVNDLEDSYGQQWTYERRKIVEYSC) are extracellular. A helical membrane pass occupies residues 919-938 (HTAFFASIVIVQWADLIICK). At 939-951 (TRRNSIVQQGMTN) the chain is on the cytoplasmic side. Ser-943 is modified (phosphoserine; by PKA). Residues 952-970 (RILIFGLFEETALAAFLSY) traverse the membrane as a helical segment. Residues 971–985 (CPGMDVALRMYPMKP) lie on the Extracellular side of the membrane. A helical membrane pass occupies residues 986 to 1006 (LWWFCAFPYSLLIFLYDEARR). The Cytoplasmic segment spans residues 1007–1023 (YILRRNPGGWVEKETYY).

Belongs to the cation transport ATPase (P-type) (TC 3.A.3) family. Type IIC subfamily. The sodium/potassium-transporting ATPase is composed of a catalytic alpha subunit, an auxiliary non-catalytic beta subunit and an additional regulatory subunit.

The protein localises to the cell membrane. It localises to the sarcolemma. It carries out the reaction K(+)(out) + Na(+)(in) + ATP + H2O = K(+)(in) + Na(+)(out) + ADP + phosphate + H(+). Functionally, this is the catalytic component of the active enzyme, which catalyzes the hydrolysis of ATP coupled with the exchange of sodium and potassium ions across the plasma membrane. This action creates the electrochemical gradient of sodium and potassium ions, providing the energy for active transport of various nutrients. This is Sodium/potassium-transporting ATPase subunit alpha-1 (atp1a1) from Oreochromis mossambicus (Mozambique tilapia).